The following is a 416-amino-acid chain: Adipocyte plasma membrane-associated protein (416 aa).

Topologically, residues 1 to 39 (MNEPEGLRFRRLNRPQIITDELQEPQYKGTSTYSGKVFR) are cytoplasmic. Residues 40-60 (VILVTLGGCLILPLLVVFFLL) form a helical membrane-spanning segment. Residues 61–412 (ESPIHPELLS…FRSPYLCKLD (352 aa)) lie on the Extracellular side of the membrane. Asparagine 160 carries an N-linked (GlcNAc...) asparagine glycan.

The protein belongs to the strictosidine synthase family.

The protein localises to the membrane. The sequence is that of Adipocyte plasma membrane-associated protein (apmap) from Salmo salar (Atlantic salmon).